The following is a 713-amino-acid chain: Protein argonaute (713 aa).

Residues 18 to 129 (EFIPKEVHFY…IKNIRKHKVV (112 aa)) are N-terminal domain. In terms of domain architecture, PAZ spans 164 to 257 (HLWDFVNRDK…FAPQFCNLVF (94 aa)). The binds 3'-end of gDNA stretch occupies residues 213-218 (HIIKYY). The interval 346 to 488 (DVPEIIRNKN…QIMGKLGIKY (143 aa)) is mid domain. Residues 426 to 699 (CFALIIGKEK…FVKALGKNWK (274 aa)) form the Piwi domain. A divalent metal cation contacts are provided by Gln457, Gln479, and Lys483. The segment at 457-460 (QNIL) is binds 5'-phosphorylated end of gDNA. Active-site residues include Asp504, Glu541, and Asp570. Residue Asp504 participates in Mn(2+) binding. Asp570 is a binding site for Mn(2+). Binds 5'-phosphorylated end of gDNA stretches follow at residues 625-632 (HKTPFGSN) and 678-679 (LR). Residue Asp688 is part of the active site. Positions 688 and 713 each coordinate Mn(2+).

It belongs to the argonaute family. Long pAgo subfamily. A divalent metal cation is required as a cofactor.

Its activity is regulated as follows. DNA cleavage is inhibited by EDTA. Functionally, a DNA-guided ssDNA endonuclease that may play a role in defense against invading genetic elements. Uses short ssDNA sequences as guides (gDNA) to bind complementary target strands, resulting in slicing of the target DNA (tDNA). Endonucleolytically cleaves tDNA (the gDNA indicates where to cleave); two major and two minor products are seen which correspond to cleavage sites between nucleotides 9/10, 10/11, 13/14, and 14/15 downstream of the target residue base-paired with the 5'-end of the gDNA. Efficient guide-dependent tDNA cleavage requires a minimal length of 15 bp and is maximal at 19 bp. Prefers gDNA with 5'-phosphorylated purines and 3'-pyrimidines; changing these bases alters the cleavage activity and patterns. Also has guide-independent activity on tDNA called 'chopping'. Probably a first round of guide-independent activity on an invading plasmid or virus would generate guide DNAs for subsequent, more efficient, guide-dependent degradation of invading nucleic acids. Has no activity on substrate with a mismatch at positions 10 and 11, on ssDNA or RNA, nor on DNA:RNA hybrids. Digests longer (750 bp) dsDNA as well as circular plasmid and naked genomic DNA, but not chromatin, in a guide DNA-independent manner. Addition of endogenous histone A3 protects DNA from cleavage, while cleavage is insensitive to methylation. When plasmid encoding active or mutated protein (Ala-541) is transformed into Sulfolobus acidocaldarius about 25-fold fewer transformants are found with active protein; reduced levels of plasmid are found in wild-type transformed cells. While S.acidocaldarius grows at a similar temperature to M.jannaschii (70 to 80 degrees Celsius) it has very different histone-like proteins, which presumably do not protect against MjAgo. Binds ssDNA, dsDNA and DNA-RNA hybrids; binding is most efficient with dsDNA. The protein is Protein argonaute of Methanocaldococcus jannaschii (strain ATCC 43067 / DSM 2661 / JAL-1 / JCM 10045 / NBRC 100440) (Methanococcus jannaschii).